The sequence spans 507 residues: DNA ligase B (507 aa).

The segment at 1 to 172 (MLLHDVAITS…AAAAGLSGAA (172 aa)) is not required for adenylyltransferase activity, required for nick joining. Residue glutamate 209 coordinates ATP. Lysine 211 functions as the N6-AMP-lysine intermediate in the catalytic mechanism. ATP contacts are provided by arginine 216, arginine 231, glutamate 260, phenylalanine 300, arginine 372, and lysine 378.

It belongs to the ATP-dependent DNA ligase family. As to quaternary structure, monomer. The cofactor is Mg(2+).

It catalyses the reaction ATP + (deoxyribonucleotide)n-3'-hydroxyl + 5'-phospho-(deoxyribonucleotide)m = (deoxyribonucleotide)n+m + AMP + diphosphate.. Functionally, DNA ligase that seals nicks in double-stranded DNA during DNA replication, DNA recombination and DNA repair. The protein is DNA ligase B (ligB) of Mycobacterium tuberculosis (strain ATCC 25618 / H37Rv).